Here is a 498-residue protein sequence, read N- to C-terminus: ATP synthase subunit beta, chloroplastic (498 aa).

ATP is bound at residue 172–179 (GGAGVGKT).

Belongs to the ATPase alpha/beta chains family. As to quaternary structure, F-type ATPases have 2 components, CF(1) - the catalytic core - and CF(0) - the membrane proton channel. CF(1) has five subunits: alpha(3), beta(3), gamma(1), delta(1), epsilon(1). CF(0) has four main subunits: a(1), b(1), b'(1) and c(9-12).

The protein localises to the plastid. The protein resides in the chloroplast thylakoid membrane. The catalysed reaction is ATP + H2O + 4 H(+)(in) = ADP + phosphate + 5 H(+)(out). Functionally, produces ATP from ADP in the presence of a proton gradient across the membrane. The catalytic sites are hosted primarily by the beta subunits. The polypeptide is ATP synthase subunit beta, chloroplastic (Nymphaea alba (White water-lily)).